We begin with the raw amino-acid sequence, 2024 residues long: Pericentriolar material 1 protein (2024 aa).

The disordered stretch occupies residues 1 to 92 (MATGGGPFED…FPHSRYMSQM (92 aa)). The residue at position 2 (Ala2) is an N-acetylalanine. A mediates interaction with DZIP1 region spans residues 2–1460 (ATGGGPFEDG…TWIASNSELT (1459 aa)). Residues 43 to 61 (RSSEKNKKKFGVESDKRVT) show a composition bias toward basic and acidic residues. Phosphoserine occurs at positions 65, 68, 69, 93, 110, 116, and 119. The segment at 111 to 163 (DLDQRSIGSDSQGRATAANNKRQLSENRKPFNFLPMQINTNKSKDASTNPPNR) is disordered. Polar residues-rich tracts occupy residues 116-132 (SIGSDSQGRATAANNKR) and 147-163 (QINTNKSKDASTNPPNR). Asn159 is modified (phosphoserine; in variant Ser-159). The stretch at 218–301 (KASSMREDLV…QLRALQGRQA (84 aa)) forms a coiled coil. Residues 354–392 (RDSQPPAVPDNRRQAESLSLTREVSQSRKPSASERLPDE) are disordered. The span at 369–383 (ESLSLTREVSQSRKP) shows a compositional bias: polar residues. Residue Ser370 is modified to Phosphoserine. The residue at position 372 (Ser372) is a Phosphoserine; by PLK4. Phosphoserine is present on Ser384. Residue Lys399 is modified to N6-acetyllysine. A coiled-coil region spans residues 400-424 (MRVLQEKKQKMDKLLGELHTLRDQH). 2 disordered regions span residues 421 to 492 (RDQH…KLQK) and 523 to 548 (ENRKDEETEESEYDSEHENSEPVTNI). Composition is skewed to polar residues over residues 425–445 (LNNSSSSPQRSVDQRSTSAPS) and 456–477 (GESNSLTSSVPYPTASLVSQNE). A coiled-coil region spans residues 487–543 (SEKLQKLNEVRKRLNELRELVHYYEQTSDMMTDAVNENRKDEETEESEYDSEHENSE). Ser588 carries the post-translational modification Phosphoserine. 2 disordered regions span residues 614-652 (HVAQGEDDEEEEEEAEEEGVSGASLSSHRSSLVDEHPED) and 699-726 (FYPAEEDTKQNSNNTRGNANKTQKDTGV). Positions 618-632 (GEDDEEEEEEAEEEG) are enriched in acidic residues. Low complexity predominate over residues 634–643 (SGASLSSHRS). Ser643 is modified (phosphoserine). Positions 651–682 (EDAEFEQKINRLMAAKQKLRQLQDLVAMVQDD) form a coiled coil. The segment covering 708–719 (QNSNNTRGNANK) has biased composition (polar residues). Coiled coils occupy residues 726–769 (VNEK…LQTA) and 824–858 (SEMRRHEMLREELRQRRKQLEALMAEHQRRQGLAE). Thr859 is subject to Phosphothreonine. Residues Ser861, Ser866, Ser869, and Ser872 each carry the phosphoserine modification. At Thr877 the chain carries Phosphothreonine. The segment at 915–947 (TDEEEEEEQDASSNDNFSVCPSNSVNHNSYNGK) is disordered. Polar residues predominate over residues 925-946 (ASSNDNFSVCPSNSVNHNSYNG). 4 positions are modified to phosphoserine: Ser960, Ser977, Ser988, and Ser991. The stretch at 1063–1089 (TQLTWQQNNVQRLKQMLNELMRQQNQH) forms a coiled coil. 2 disordered regions span residues 1085-1109 (QQNQHPEKPGGKERGSSASHPPSPS) and 1152-1211 (FSQN…RTPW). Basic and acidic residues predominate over residues 1089-1099 (HPEKPGGKERG). Over residues 1152–1173 (FSQNISTPSEQQQPLAQNSSGK) the composition is skewed to polar residues. A phosphoserine mark is found at Ser1185 and Ser1188. Positions 1192–1201 (EKPRNKKLPE) are enriched in basic and acidic residues. Phosphoserine occurs at positions 1229 and 1231. A compositionally biased stretch (polar residues) spans 1232–1246 (VEKSTSSNRKNQLDT). The tract at residues 1232 to 1342 (VEKSTSSNRK…RHSAQTEEPV (111 aa)) is disordered. Ser1257, Ser1260, Ser1262, and Ser1263 each carry phosphoserine. The segment at 1279 to 1799 (TRKASAQASL…TQALTNYGSG (521 aa)) is interaction with HAP1. Positions 1296 to 1313 (KSKSKKRNSTQLKSRVKN) are enriched in basic residues. Ser1318 and Ser1320 each carry phosphoserine. At Thr1468 the chain carries Phosphothreonine. Residues 1515 to 1539 (IHLDQALARMREYERMKTEAESNSN) are a coiled coil. Residues Ser1573, Ser1697, Ser1730, Ser1765, Ser1768, Ser1776, and Ser1782 each carry the phosphoserine modification. Disordered regions lie at residues 1725 to 1868 (LEDH…NNCP) and 1880 to 1944 (EQPL…PVLV). Residues 1768-1777 (SDQEEDEESE) are compositionally biased toward acidic residues. Over residues 1783-1797 (INLSKAETQALTNYG) the composition is skewed to polar residues. Residues 1799-1815 (GEDENEDEEMEEFEEGP) are compositionally biased toward acidic residues. Polar residues predominate over residues 1818-1827 (VQTSLQANTE). Residues 1835–1860 (DEQVLQRDFKKTAESKNVPLEREATS) are compositionally biased toward basic and acidic residues. Positions 1905 to 1916 (PLRLPEMEPLVP) are enriched in low complexity. Residues 1913-2024 (PLVPRVKEVK…EPETVGAQSI (112 aa)) form an interaction with BBS4 region. Residues 1924–1933 (AQETPESSLA) show a composition bias toward polar residues. 2 positions are modified to phosphoserine: Ser1958 and Ser1977. A disordered region spans residues 2005 to 2024 (ELAGNSETLKEPETVGAQSI).

The protein belongs to the PCM1 family. As to quaternary structure, self-associates. Interacts with C2CD3. Interacts with BBS4, BBS8, CETN3, HAP1, NDE1, NDEL1, MAP1LC3B, GABARAPAL2, and GABARAP. Interacts with CEP131; the interaction increases in response to ultraviolet light (UV) radiation. Associates with microtubule; association to microtubule is reduced in response to cellular stress, such as ultraviolet light (UV) radiation or heat shock, in a process that requires p38 MAP kinase signaling. Interacts with CFAP263. Interacts with SSX2IP. Interacts with CCDC13. Interacts with CEP290. Interacts with PARD6A. Interacts with KIAA0753/OFIP, CEP20/FOR20 and OFD1; the interaction with CEP20/FOR20 and OFD1 may be mediated by KIAA0753/OFIP. Interacts with CCDC66. Interacts with CCDC61. Interacts with DZIP1; localizes DZIP1 and the associated BBSome to centriolar satellite. Interacts with CSTPP1, TTLL1, TPGS1 and LRRC49. Interacts with CFAP53. Post-translationally, ubiquitinated. Undergoes monoubiquitination catalyzed by the E3 ubiquitin-protein ligase MIB1 in proliferating cells, preventing cilia formation. Monoubiquitination by MIB1 is inhibited in response to cellular stress, such as ultraviolet light (UV) radiation or heat shock, resulting in cilia formation initiation. Variant Ser-159 is phosphorylated. In terms of processing, phosphorylated on multiple serine and threonine residues by DYRK3 during the G2-to-M transition, after the nuclear-envelope breakdown. Phosphorylation by DYRK3 promotes disassembly of pericentriolar material. Phosphorylation at Ser-372 mediated by PLK4 is required to maintain the integrity of centriolar satellites. Expressed in blood, bone marrow, breast, lymph node, ovary and thyroid.

It localises to the cytoplasm. Its subcellular location is the cytoskeleton. The protein resides in the microtubule organizing center. It is found in the centrosome. The protein localises to the cytoplasmic granule. It localises to the centriolar satellite. Its subcellular location is the cilium basal body. Functionally, required for centrosome assembly and function. Essential for the correct localization of several centrosomal proteins including CEP250, CETN3, PCNT and NEK2. Required to anchor microtubules to the centrosome. Also involved in cilium biogenesis by recruiting the BBSome, a ciliary protein complex involved in cilium biogenesis, to the centriolar satellites. Recruits the tubulin polyglutamylase complex (TPGC) to centriolar satellites. This is Pericentriolar material 1 protein from Homo sapiens (Human).